Reading from the N-terminus, the 645-residue chain is Putative palmitoyltransferase ZDHHC13 (645 aa).

Residues 1–73 are disordered; that stretch reads MDWSEGDGSH…KSSHPEDSSS (73 aa). At 1 to 314 the chain is on the cytoplasmic side; sequence MDWSEGDGSH…ACLKLLNRYK (314 aa). The span at 7 to 20 shows a compositional bias: basic and acidic residues; it reads DGSHSHGHMGDSCH. Basic residues predominate over residues 23–33; that stretch reads GGGHSHGHGHS. Residues 34-43 show a composition bias toward gly residues; the sequence is HGGSGFGGFM. ANK repeat units follow at residues 104 to 133, 138 to 167, 171 to 200, 204 to 234, and 239 to 268; these read ENVT…VIDQ, LNST…DPSL, EGYR…EVDL, NGQT…SVNA, and NRNS…SVDM. Residues 315-335 form a helical membrane-spanning segment; that stretch reads VCLQSVFSVVVVGAFGAILDM. Arg-336 is a topological domain (lumenal). The chain crosses the membrane as a helical span at residues 337–357; the sequence is TESWLLKGILLACIMAVINLA. The Cytoplasmic segment spans residues 358–369; sequence SRQLATVAVRSL. The helical transmembrane segment at 370-390 threads the bilayer; the sequence is IPSTGLIASVFWMVVTWVLWF. The Lumenal portion of the chain corresponds to 391–394; that stretch reads LPDE. Residues 395–415 traverse the membrane as a helical segment; sequence PSAAVQMLFTVNITAVLYYYI. The Cytoplasmic segment spans residues 416-492; sequence RSCRTDPGHV…NGCIGARNHP (77 aa). The 51-residue stretch at 449–499 folds into the DHHC domain; sequence IFCTSCMMRKPMRANHCFSCNACVAKQDHHSIWINGCIGARNHPFFVLFLV. Residues 493–513 traverse the membrane as a helical segment; it reads FFVLFLVALNFLCIWMFYGSI. The Lumenal segment spans residues 514-542; sequence TYWSRHCPLHYSEEGIWGALTALMGCSPW. Residues 543–563 traverse the membrane as a helical segment; that stretch reads LLYVFCFVFFHTTWASILLVL. Topologically, residues 564–645 are cytoplasmic; that stretch reads QLYQIAFLGL…RDMFSSPDAV (82 aa).

The protein belongs to the DHHC palmitoyltransferase family. AKR/ZDHHC17 subfamily.

The protein resides in the golgi apparatus membrane. It localises to the cytoplasmic vesicle membrane. Its function is as follows. Putative palmitoyltransferase that could catalyze the addition of palmitate onto various protein substrates. The polypeptide is Putative palmitoyltransferase ZDHHC13 (Danio rerio (Zebrafish)).